Consider the following 64-residue polypeptide: DNA gyrase inhibitor YacG (64 aa).

Zn(2+) is bound by residues Cys-9, Cys-12, Cys-28, and Cys-32. Residues 42–64 form a disordered region; the sequence is DEENAIPGAPDMSDSDGWSEEQY. A compositionally biased stretch (acidic residues) spans 54 to 64; that stretch reads SDSDGWSEEQY.

It belongs to the DNA gyrase inhibitor YacG family. Interacts with GyrB. Requires Zn(2+) as cofactor.

Functionally, inhibits all the catalytic activities of DNA gyrase by preventing its interaction with DNA. Acts by binding directly to the C-terminal domain of GyrB, which probably disrupts DNA binding by the gyrase. The chain is DNA gyrase inhibitor YacG from Vibrio vulnificus (strain YJ016).